A 172-amino-acid chain; its full sequence is Envelope protein UL45 (172 aa).

Residues 1-27 lie on the Intravirion side of the membrane; it reads MPLRASEHAYRPLGPGTPPMRARLPAA. The helical; Signal-anchor for type II membrane protein transmembrane segment at 28-48 threads the bilayer; the sequence is AWVGVGTIIGGVVIIAALVLV. At 49 to 172 the chain is on the virion surface side; the sequence is PSRASWALSP…TSTRNALGLP (124 aa).

Belongs to the herpesviridae HHV-1 UL45 family.

The protein resides in the virion membrane. Its function is as follows. Important virulence factor of HSV neurotropism. Seems to be required for glycoprotein B-induced fusion. Dispensable for growth in vitro. The protein is Envelope protein UL45 of Human herpesvirus 1 (strain KOS) (HHV-1).